The chain runs to 719 residues: uncharacterized protein (719 aa).

Positions 64 to 100 form a coiled coil; it reads IQNLNQRKEEVIRLIAEQDKLTDNLKRKIEQSVKLQE. An S1 motif domain is found at 649–718; sequence GMELQGTVRN…QKGRVSLSMV (70 aa).

This is an uncharacterized protein from Bacillus subtilis (strain 168).